The following is a 275-amino-acid chain: DNA-directed RNA polymerase subunit Rpo3 (275 aa).

It belongs to the archaeal Rpo3/eukaryotic RPB3 RNA polymerase subunit family. In terms of assembly, part of the RNA polymerase complex.

The protein resides in the cytoplasm. The enzyme catalyses RNA(n) + a ribonucleoside 5'-triphosphate = RNA(n+1) + diphosphate. DNA-dependent RNA polymerase (RNAP) catalyzes the transcription of DNA into RNA using the four ribonucleoside triphosphates as substrates. The chain is DNA-directed RNA polymerase subunit Rpo3 from Methanopyrus kandleri (strain AV19 / DSM 6324 / JCM 9639 / NBRC 100938).